Consider the following 200-residue polypeptide: NADH-quinone oxidoreductase subunit C (200 aa).

It belongs to the complex I 30 kDa subunit family. In terms of assembly, NDH-1 is composed of 14 different subunits. Subunits NuoB, C, D, E, F, and G constitute the peripheral sector of the complex.

The protein resides in the cell inner membrane. It carries out the reaction a quinone + NADH + 5 H(+)(in) = a quinol + NAD(+) + 4 H(+)(out). Its function is as follows. NDH-1 shuttles electrons from NADH, via FMN and iron-sulfur (Fe-S) centers, to quinones in the respiratory chain. The immediate electron acceptor for the enzyme in this species is believed to be ubiquinone. Couples the redox reaction to proton translocation (for every two electrons transferred, four hydrogen ions are translocated across the cytoplasmic membrane), and thus conserves the redox energy in a proton gradient. This chain is NADH-quinone oxidoreductase subunit C, found in Burkholderia multivorans (strain ATCC 17616 / 249).